The primary structure comprises 230 residues: Orotidine 5'-phosphate decarboxylase (230 aa).

Substrate-binding positions include Asp-16, Lys-38, Asp-65–Thr-74, Thr-119, Arg-180, Gln-189, Gly-209, and Arg-210. The active-site Proton donor is the Lys-67.

The protein belongs to the OMP decarboxylase family. Type 1 subfamily. As to quaternary structure, homodimer.

It carries out the reaction orotidine 5'-phosphate + H(+) = UMP + CO2. The protein operates within pyrimidine metabolism; UMP biosynthesis via de novo pathway; UMP from orotate: step 2/2. Catalyzes the decarboxylation of orotidine 5'-monophosphate (OMP) to uridine 5'-monophosphate (UMP). This chain is Orotidine 5'-phosphate decarboxylase, found in Methylobacterium radiotolerans (strain ATCC 27329 / DSM 1819 / JCM 2831 / NBRC 15690 / NCIMB 10815 / 0-1).